A 265-amino-acid chain; its full sequence is Gap junction beta-4 protein (265 aa).

An intramembrane segment occupies 2–13; the sequence is NWGFLQGILSGV. The Cytoplasmic portion of the chain corresponds to 14-20; the sequence is NKYSTAL. A helical transmembrane segment spans residues 21 to 40; sequence GRIWLSVVFIFRVLVYVVAA. Over 41–73 the chain is Extracellular; that stretch reads EEVWDDEQKDFICNTKQPGCPNVCYDEFFPVSH. Intrachain disulfides connect Cys-53–Cys-175, Cys-60–Cys-169, and Cys-64–Cys-164. Residues 74–94 traverse the membrane as a helical segment; sequence VRLWALQLILVTCPSLLVVMH. The Cytoplasmic segment spans residues 95–130; sequence VAYREERERKHRLKHGPDAPALYSNLSKKRGGLWWT. The helical transmembrane segment at 131-151 threads the bilayer; it reads YLLSLIFKAAVDSGFLYIFHC. Over 152 to 184 the chain is Extracellular; sequence IYKDYDMPRVVACSVQPCPHTVDCYISRPTEKK. The helical transmembrane segment at 185–205 threads the bilayer; sequence VFTYFMVVTAAICILLNLSEV. Over 206 to 265 the chain is Cytoplasmic; the sequence is AYLVGKRCMEVFRPRRQKTSRRHQLPDTCPPYVISKGHPQDESTVLTKAGMATVDAGVYP.

This sequence belongs to the connexin family. Beta-type (group I) subfamily. A hemichannel or connexon is composed of a hexamer of connexins. A functional gap junction is formed by the apposition of two hemichannels. Forms heteromeric channels with GJB2. Detected in adult heart, kidney, skin and cochlea, where it is detected in spiral ganglion, stria vascularis, spiral limbus and spiral ligament (at protein level).

It localises to the cell membrane. The protein resides in the cell junction. It is found in the gap junction. Its function is as follows. Structural component of gap junctions. Gap junctions are dodecameric channels that connect the cytoplasm of adjoining cells. They are formed by the docking of two hexameric hemichannels, one from each cell membrane. Small molecules and ions diffuse from one cell to a neighboring cell via the central pore. This is Gap junction beta-4 protein (Gjb4) from Rattus norvegicus (Rat).